Reading from the N-terminus, the 184-residue chain is MTRLIFLGPPGAGKGTQAQILAEHLHIPHISTGDILRQAMKEQTPLGIKAQSYVDSGELVPDQLVQDLVEERLEQADAKSGWILDGFPRKVTQAAFLEELLQKTGQGGERVVNLDAADDVVVARLLSRGRKDDTEEVIRRRLEIYRSDTAPLIDYYSDRQKLLTINGDQSQEEVTHELKATLGS.

Residue 11-16 coordinates ATP; it reads GAGKGT. The segment at 31-60 is NMP; sequence STGDILRQAMKEQTPLGIKAQSYVDSGELV. AMP is bound by residues Thr-32, Arg-37, 58–60, 86–89, and Gln-93; these read ELV and GFPR. The interval 127–133 is LID; sequence SRGRKDD. ATP is bound at residue Arg-128. AMP is bound by residues Arg-130 and Arg-141. Gln-169 is a binding site for ATP.

It belongs to the adenylate kinase family. Monomer.

The protein resides in the cytoplasm. It carries out the reaction AMP + ATP = 2 ADP. Its pathway is purine metabolism; AMP biosynthesis via salvage pathway; AMP from ADP: step 1/1. Catalyzes the reversible transfer of the terminal phosphate group between ATP and AMP. Plays an important role in cellular energy homeostasis and in adenine nucleotide metabolism. This chain is Adenylate kinase 1, found in Nostoc sp. (strain PCC 7120 / SAG 25.82 / UTEX 2576).